Here is a 146-residue protein sequence, read N- to C-terminus: Prefoldin subunit alpha (146 aa).

It belongs to the prefoldin alpha subunit family. As to quaternary structure, heterohexamer of two alpha and four beta subunits.

It localises to the cytoplasm. Molecular chaperone capable of stabilizing a range of proteins. Seems to fulfill an ATP-independent, HSP70-like function in archaeal de novo protein folding. This is Prefoldin subunit alpha from Methanococcus vannielii (strain ATCC 35089 / DSM 1224 / JCM 13029 / OCM 148 / SB).